The chain runs to 276 residues: Rhomboid protease GlpG (276 aa).

A run of 6 helical transmembrane segments spans residues 94–114 (GPVT…MQIL), 142–162 (ALMH…WYLG), 169–189 (LGSG…GYVQ), 192–212 (FSGP…GYVW), 229–249 (LIIF…GMSM), and 250–270 (ANGA…VDSL). Ser-201 (nucleophile) is an active-site residue. His-254 is a catalytic residue.

It belongs to the peptidase S54 family.

The protein localises to the cell inner membrane. It catalyses the reaction Cleaves type-1 transmembrane domains using a catalytic dyad composed of serine and histidine that are contributed by different transmembrane domains.. Rhomboid-type serine protease that catalyzes intramembrane proteolysis. This Escherichia coli O81 (strain ED1a) protein is Rhomboid protease GlpG.